The primary structure comprises 337 residues: Anthranilate phosphoribosyltransferase (337 aa).

5-phospho-alpha-D-ribose 1-diphosphate contacts are provided by residues G82, 85–86 (GD), T90, 92–95 (NIST), 110–118 (KHGGRSVSS), and S122. G82 provides a ligand contact to anthranilate. S94 lines the Mg(2+) pocket. R168 is an anthranilate binding site. Mg(2+)-binding residues include D226 and E227.

This sequence belongs to the anthranilate phosphoribosyltransferase family. In terms of assembly, homodimer. Mg(2+) serves as cofactor.

The enzyme catalyses N-(5-phospho-beta-D-ribosyl)anthranilate + diphosphate = 5-phospho-alpha-D-ribose 1-diphosphate + anthranilate. Its pathway is amino-acid biosynthesis; L-tryptophan biosynthesis; L-tryptophan from chorismate: step 2/5. In terms of biological role, catalyzes the transfer of the phosphoribosyl group of 5-phosphorylribose-1-pyrophosphate (PRPP) to anthranilate to yield N-(5'-phosphoribosyl)-anthranilate (PRA). The protein is Anthranilate phosphoribosyltransferase of Francisella tularensis subsp. mediasiatica (strain FSC147).